A 577-amino-acid polypeptide reads, in one-letter code: Beta-fructofuranosidase, insoluble isoenzyme 1 (577 aa).

The N-terminal stretch at 1–22 (MGTRLLALAPWLLLLLLQLAGA) is a signal peptide. Aspartate 63 is an active-site residue. N-linked (GlcNAc...) asparagine glycosylation is found at asparagine 158, asparagine 183, and asparagine 333.

It belongs to the glycosyl hydrolase 32 family.

The protein localises to the secreted. It localises to the extracellular space. The protein resides in the apoplast. It is found in the cell wall. It catalyses the reaction Hydrolysis of terminal non-reducing beta-D-fructofuranoside residues in beta-D-fructofuranosides.. In terms of biological role, may play a role in sucrose partitioning during seed development and in stress response. The chain is Beta-fructofuranosidase, insoluble isoenzyme 1 (CIN1) from Oryza sativa subsp. indica (Rice).